The following is a 408-amino-acid chain: NADH-quinone oxidoreductase subunit D (408 aa).

This sequence belongs to the complex I 49 kDa subunit family. NDH-1 is composed of 14 different subunits. Subunits NuoB, C, D, E, F, and G constitute the peripheral sector of the complex.

The protein resides in the cell inner membrane. The catalysed reaction is a quinone + NADH + 5 H(+)(in) = a quinol + NAD(+) + 4 H(+)(out). Functionally, NDH-1 shuttles electrons from NADH, via FMN and iron-sulfur (Fe-S) centers, to quinones in the respiratory chain. The immediate electron acceptor for the enzyme in this species is believed to be ubiquinone. Couples the redox reaction to proton translocation (for every two electrons transferred, four hydrogen ions are translocated across the cytoplasmic membrane), and thus conserves the redox energy in a proton gradient. The chain is NADH-quinone oxidoreductase subunit D from Campylobacter jejuni subsp. jejuni serotype O:23/36 (strain 81-176).